Reading from the N-terminus, the 191-residue chain is Probable DNA-directed RNA polymerase subunit delta (191 aa).

The HTH HARE-type domain occupies 14–83; sequence LSMIEVARAI…GENKWGLRSW (70 aa). The interval 119–191 is disordered; sequence EDAIDYRDDD…EDEEDEEPVL (73 aa).

In terms of assembly, RNAP is composed of a core of 2 alpha, a beta and a beta' subunits. The core is associated with a delta subunit and one of several sigma factors.

Participates in both the initiation and recycling phases of transcription. In the presence of the delta subunit, RNAP displays an increased specificity of transcription, a decreased affinity for nucleic acids, and an increased efficiency of RNA synthesis because of enhanced recycling. The sequence is that of Probable DNA-directed RNA polymerase subunit delta from Streptococcus pyogenes serotype M6 (strain ATCC BAA-946 / MGAS10394).